Consider the following 473-residue polypeptide: Serine carboxypeptidase-like 25 (473 aa).

Residues 1 to 22 (MAMAKLAIFTTLMAILVMTSQG) form the signal peptide. Residues Asn46 and Asn143 are each glycosylated (N-linked (GlcNAc...) asparagine). 3 cysteine pairs are disulfide-bonded: Cys92–Cys358, Cys252–Cys263, and Cys288–Cys326. Ser185 is a catalytic residue. 4 N-linked (GlcNAc...) asparagine glycosylation sites follow: Asn289, Asn299, Asn347, and Asn367. Active-site residues include Asp395 and His447.

This sequence belongs to the peptidase S10 family. As to expression, ubiquitous.

The protein resides in the secreted. Functionally, probable carboxypeptidase. This is Serine carboxypeptidase-like 25 (SCPL25) from Arabidopsis thaliana (Mouse-ear cress).